The sequence spans 726 residues: Catalase-peroxidase (726 aa).

The disordered stretch occupies residues 1-33; it reads MSTTDDTHNTLSAGKCPFHQGGHDRSAGAGTAS. The segment at residues 105 to 226 is a cross-link (tryptophyl-tyrosyl-methioninium (Trp-Tyr) (with M-252)); sequence WHGAGTYRSI…LGATEMGLIY (122 aa). H106 acts as the Proton acceptor in catalysis. The tryptophyl-tyrosyl-methioninium (Tyr-Met) (with W-105) cross-link spans 226 to 252; it reads YVNPEGPDHSGEPLSAAAAIRATFGNM. Residue H267 coordinates heme b.

It belongs to the peroxidase family. Peroxidase/catalase subfamily. As to quaternary structure, homodimer or homotetramer. It depends on heme b as a cofactor. Post-translationally, formation of the three residue Trp-Tyr-Met cross-link is important for the catalase, but not the peroxidase activity of the enzyme.

The catalysed reaction is H2O2 + AH2 = A + 2 H2O. It carries out the reaction 2 H2O2 = O2 + 2 H2O. Its function is as follows. Bifunctional enzyme with both catalase and broad-spectrum peroxidase activity. This Salmonella arizonae (strain ATCC BAA-731 / CDC346-86 / RSK2980) protein is Catalase-peroxidase.